Here is a 342-residue protein sequence, read N- to C-terminus: Nuclear hormone receptor family member nhr-150 (342 aa).

A DNA-binding region (nuclear receptor) is located at residues 1–71 (MCQVCGAAEA…AGMTSKKIQS (71 aa)). Residues 2-22 (CQVCGAAEADLHFGGISCRAC) form an NR C4-type zinc finger. Residues 39–54 (CTCKTRILDSHPCRSC) form an NR C4-type; degenerate zinc finger. Positions 94–341 (SARIIPRSSL…GFMEIIRESK (248 aa)) constitute an NR LBD domain.

It belongs to the nuclear hormone receptor family.

The protein resides in the nucleus. Functionally, orphan nuclear receptor. This chain is Nuclear hormone receptor family member nhr-150 (nhr-150), found in Caenorhabditis elegans.